Here is a 998-residue protein sequence, read N- to C-terminus: Collagen alpha-1(I) chain (998 aa).

The disordered stretch occupies residues 1–998; it reads SYGYDEKGGV…GPPGPPGPPG (998 aa). Over residues 9–22 the composition is skewed to low complexity; it reads GVSVPGPMGPSGPR. 11 positions are modified to 4-hydroxyproline: proline 25, proline 28, proline 30, proline 39, proline 42, proline 45, proline 59, proline 74, proline 80, proline 89, and proline 95. Positions 62–76 are enriched in basic and acidic residues; sequence NGDDGEAGKPGRPGE. A 5-hydroxylysine; alternate modification is found at lysine 98. Lysine 98 is a glycosylation site (O-linked (Gal...) hydroxylysine; alternate). The residue at position 104 (serine 104) is a Phosphoserine. A compositionally biased stretch (low complexity) spans 112 to 128; sequence DAGPAGPKGEPGSPGEN. 4-hydroxyproline occurs at positions 122, 125, 131, 140, 146, 167, 176, 179, 206, 209, 221, 227, 236, 242, 245, and 260. The span at 146–164 shows a compositional bias: low complexity; the sequence is PGASGPAGARGNDGATGAA. Positions 166-178 are enriched in pro residues; it reads PPGPTGPAGPPGF. The segment covering 212–251 has biased composition (low complexity); that stretch reads AGAAGPAGNPGADGQPGAKGANGAPGIAGAPGFPGARGPS. 5-hydroxylysine is present on lysine 263. 4-hydroxyproline occurs at positions 269, 272, 284, 293, 308, 314, 323, and 329. Over residues 318–327 the composition is skewed to gly residues; that stretch reads GERGGPGSRG. Lysine 338 is subject to 5-hydroxylysine. 25 positions are modified to 4-hydroxyproline: proline 347, proline 356, proline 362, proline 368, proline 377, proline 380, proline 389, proline 398, proline 404, proline 416, proline 425, proline 434, proline 437, proline 455, proline 472, proline 478, proline 484, proline 490, proline 496, proline 502, proline 514, proline 523, proline 537, proline 543, and proline 552. A compositionally biased stretch (low complexity) spans 371 to 397; sequence KGLTGSPGSPGPDGKTGPPGPAGQDGR. Residues 406–425 show a composition bias toward low complexity; that stretch reads ARGQAGVMGFPGPKGAAGEP. The segment covering 484–493 has biased composition (low complexity); it reads PGEAGKPGEQ. Lysine 564 is subject to 5-hydroxylysine. A 4-hydroxyproline mark is found at proline 570, proline 585, and proline 591. Residues 597–611 show a composition bias toward low complexity; that stretch reads SGPSGPAGPTGARGA. At serine 600 the chain carries Phosphoserine. 4-hydroxyproline is present on residues proline 612, proline 618, proline 621, proline 630, proline 636, proline 654, proline 663, and proline 672. A compositionally biased stretch (low complexity) spans 624–651; the sequence is AGFAGPPGADGQPGAKGEPGDAGAKGDA. The segment covering 653 to 665 has biased composition (pro residues); the sequence is PPGPAGPTGPPGP. Lysine 675 is modified (5-hydroxylysine). Residues 680–696 are compositionally biased toward low complexity; sequence SAGPPGATGFPGAAGRV. 4-hydroxyproline occurs at positions 684 and 690. Proline 698 carries the post-translational modification 3-hydroxyproline. Proline 699, proline 708, proline 711, proline 732, proline 741, proline 749, proline 758, proline 776, proline 785, proline 788, proline 794, proline 809, proline 815, proline 821, proline 830, and proline 836 each carry 4-hydroxyproline. Over residues 725–734 the composition is skewed to low complexity; that stretch reads ETGPAGRPGE. Over residues 746-758 the composition is skewed to low complexity; sequence KGSPGADGPAGAP. Residues 808 to 818 are compositionally biased toward pro residues; the sequence is PPGPMGPPGLA. 5-hydroxylysine is present on lysine 845. Residues 853–868 show a composition bias toward pro residues; it reads PGPPGAPGAPGAPGPV. 4-hydroxyproline occurs at positions 856, 859, and 862. A compositionally biased stretch (low complexity) spans 889–903; the sequence is AGPAGARGPAGPQGP. Positions 904–918 are enriched in basic and acidic residues; sequence RGDKGETGEQGDRGI. At lysine 907 the chain carries 5-hydroxylysine. Lysine 919 carries the 5-hydroxylysine; alternate modification. An O-linked (Gal...) hydroxylysine; alternate glycan is attached at lysine 919. 4-hydroxyproline occurs at positions 934, 937, 955, and 970. A compositionally biased stretch (low complexity) spans 937-970; the sequence is PGEQGPSGASGPAGPRGPPGSAGSPGKDGLNGLP. Proline 975 is modified (3-hydroxyproline). 4-hydroxyproline is present on proline 976. Over residues 988-998 the composition is skewed to pro residues; the sequence is VGPPGPPGPPG. Proline 990 is modified (3-hydroxyproline). Proline 991 bears the 4-hydroxyproline mark. Residue proline 993 is modified to 3-hydroxyproline. Proline 994 bears the 4-hydroxyproline mark. Residue proline 996 is modified to 3-hydroxyproline. 4-hydroxyproline is present on proline 997.

This sequence belongs to the fibrillar collagen family. Trimers of one alpha 2(I) and two alpha 1(I) chains. Post-translationally, contains mostly 4-hydroxyproline. Proline residues at the third position of the tripeptide repeating unit (G-X-Y) are hydroxylated in some or all of the chains. Contains 3-hydroxyproline at a few sites. This modification occurs on the first proline residue in the sequence motif Gly-Pro-Hyp, where Hyp is 4-hydroxyproline. In terms of processing, lysine residues at the third position of the tripeptide repeating unit (G-X-Y) are 5-hydroxylated in some or all of the chains. Post-translationally, O-glycosylated on hydroxylated lysine residues. The O-linked glycan consists of a Glc-Gal disaccharide. As to expression, expressed in bones.

The protein localises to the secreted. The protein resides in the extracellular space. It is found in the extracellular matrix. Functionally, type I collagen is a member of group I collagen (fibrillar forming collagen). This chain is Collagen alpha-1(I) chain, found in Nothrotheriops shastensis (Shasta ground sloth).